A 368-amino-acid polypeptide reads, in one-letter code: S-adenosylmethionine decarboxylase proenzyme 1 (368 aa).

Catalysis depends on residues glutamate 9 and arginine 12. The Schiff-base intermediate with substrate; via pyruvic acid role is filled by serine 69. At serine 69 the chain carries Pyruvic acid (Ser); by autocatalysis. Cysteine 83 (proton donor; for catalytic activity) is an active-site residue. Residues serine 234 and histidine 247 each act as proton acceptor; for processing activity in the active site.

This sequence belongs to the eukaryotic AdoMetDC family. It depends on pyruvate as a cofactor. In terms of processing, is synthesized initially as an inactive proenzyme. Formation of the active enzyme involves a self-maturation process in which the active site pyruvoyl group is generated from an internal serine residue via an autocatalytic post-translational modification. Two non-identical subunits are generated from the proenzyme in this reaction, and the pyruvate is formed at the N-terminus of the alpha chain, which is derived from the carboxyl end of the proenzyme. The post-translation cleavage follows an unusual pathway, termed non-hydrolytic serinolysis, in which the side chain hydroxyl group of the serine supplies its oxygen atom to form the C-terminus of the beta chain, while the remainder of the serine residue undergoes an oxidative deamination to produce ammonia and the pyruvoyl group blocking the N-terminus of the alpha chain.

It carries out the reaction S-adenosyl-L-methionine + H(+) = S-adenosyl 3-(methylsulfanyl)propylamine + CO2. It participates in amine and polyamine biosynthesis; S-adenosylmethioninamine biosynthesis; S-adenosylmethioninamine from S-adenosyl-L-methionine: step 1/1. The chain is S-adenosylmethionine decarboxylase proenzyme 1 (SAMDC1) from Brassica juncea (Indian mustard).